A 407-amino-acid chain; its full sequence is Rubber oxygenase (407 aa).

The tat-type signal signal peptide spans 1 to 30; sequence MDGFSRRRMLMTGGALGAVGALGAATRALA. Residue His198 participates in heme binding.

It belongs to the rubber oxygenase Lcp family. Heme b serves as cofactor. Exported by the Tat system. The position of the signal peptide cleavage has not been experimentally proven.

It localises to the secreted. Its pathway is biopolymer metabolism. Functionally, involved in the initial step of rubber degradation. Catalyzes the oxidative C-C cleavage of poly(cis-1,4-isoprene) in synthetic as well as in natural rubber by the addition of oxygen (O2) to the double bonds, leading to a mixture of oligonucleotide-isoprenoids with terminal keto and aldehyde groups (endo-type cleavage). The cleavage products are of different lengths, ranging from C20 (four isoprene units) to higher oligo-isoprenoids. Is not able to cleave low-molecular-weight substrate analogs with isoprenoid structure such as squalene (1,4-trans-isoprenoid), carotenoids, or alpha-tocopherol. This is Rubber oxygenase from Streptomyces sp. (strain K30).